The following is a 175-amino-acid chain: ATP synthase subunit delta (175 aa).

Belongs to the ATPase delta chain family. F-type ATPases have 2 components, F(1) - the catalytic core - and F(0) - the membrane proton channel. F(1) has five subunits: alpha(3), beta(3), gamma(1), delta(1), epsilon(1). F(0) has three main subunits: a(1), b(2) and c(10-14). The alpha and beta chains form an alternating ring which encloses part of the gamma chain. F(1) is attached to F(0) by a central stalk formed by the gamma and epsilon chains, while a peripheral stalk is formed by the delta and b chains.

Its subcellular location is the cell inner membrane. F(1)F(0) ATP synthase produces ATP from ADP in the presence of a proton or sodium gradient. F-type ATPases consist of two structural domains, F(1) containing the extramembraneous catalytic core and F(0) containing the membrane proton channel, linked together by a central stalk and a peripheral stalk. During catalysis, ATP synthesis in the catalytic domain of F(1) is coupled via a rotary mechanism of the central stalk subunits to proton translocation. In terms of biological role, this protein is part of the stalk that links CF(0) to CF(1). It either transmits conformational changes from CF(0) to CF(1) or is implicated in proton conduction. This chain is ATP synthase subunit delta, found in Xylella fastidiosa (strain M12).